The chain runs to 72 residues: Large ribosomal subunit protein bL28 (72 aa).

Belongs to the bacterial ribosomal protein bL28 family.

This Chlorobium phaeobacteroides (strain DSM 266 / SMG 266 / 2430) protein is Large ribosomal subunit protein bL28.